A 671-amino-acid polypeptide reads, in one-letter code: Pescadillo homolog (671 aa).

The BRCT domain occupies 317 to 403 (KVRELFRGLT…LMLPVTGYRI (87 aa)). Residues 548-584 (QALRKAQEKSRQTETSEARLQRKMSEVKRQEAATRKM) are a coiled coil. 2 disordered regions span residues 552 to 578 (KAQEKSRQTETSEARLQRKMSEVKRQE) and 643 to 671 (RRQRAEAKSKKLKERKAGNPYKKLPKWVQ).

It belongs to the pescadillo family.

It localises to the nucleus. It is found in the nucleolus. The protein localises to the nucleoplasm. In terms of biological role, required for maturation of ribosomal RNAs and formation of the large ribosomal subunit. The chain is Pescadillo homolog from Leishmania infantum.